Reading from the N-terminus, the 104-residue chain is Large ribosomal subunit protein uL24 (104 aa).

This sequence belongs to the universal ribosomal protein uL24 family. In terms of assembly, part of the 50S ribosomal subunit.

Functionally, one of two assembly initiator proteins, it binds directly to the 5'-end of the 23S rRNA, where it nucleates assembly of the 50S subunit. One of the proteins that surrounds the polypeptide exit tunnel on the outside of the subunit. This Colwellia psychrerythraea (strain 34H / ATCC BAA-681) (Vibrio psychroerythus) protein is Large ribosomal subunit protein uL24.